A 65-amino-acid chain; its full sequence is MNIEQFRAKSVDDLKAHLIELRKEQFSMRMQLAMGQFQKTHEIRRVRRNIARVKYVLSWINRASA.

Belongs to the universal ribosomal protein uL29 family.

In Xylella fastidiosa (strain 9a5c), this protein is Large ribosomal subunit protein uL29 (rpmC).